Here is a 161-residue protein sequence, read N- to C-terminus: Nucleotide-binding protein Gura_0717 (161 aa).

It belongs to the YajQ family.

Functionally, nucleotide-binding protein. The sequence is that of Nucleotide-binding protein Gura_0717 from Geotalea uraniireducens (strain Rf4) (Geobacter uraniireducens).